We begin with the raw amino-acid sequence, 470 residues long: Cell division protein FtsP (470 aa).

The segment at residues 1–29 is a signal peptide (tat-type signal); that stretch reads MKNCSRRQLLKTTLFSTALFSVPAPLLAA.

It belongs to the FtsP family. Predicted to be exported by the Tat system. The position of the signal peptide cleavage has not been experimentally proven.

It is found in the periplasm. Functionally, cell division protein that is required for growth during stress conditions. May be involved in protecting or stabilizing the divisomal assembly under conditions of stress. This is Cell division protein FtsP from Aggregatibacter aphrophilus (strain NJ8700) (Haemophilus aphrophilus).